The primary structure comprises 200 residues: Large ribosomal subunit protein uL4 (200 aa).

Positions 43 to 67 (RAQKTRAEVSGSGKKPWRQKGTGRA) are disordered.

Belongs to the universal ribosomal protein uL4 family. As to quaternary structure, part of the 50S ribosomal subunit.

Functionally, one of the primary rRNA binding proteins, this protein initially binds near the 5'-end of the 23S rRNA. It is important during the early stages of 50S assembly. It makes multiple contacts with different domains of the 23S rRNA in the assembled 50S subunit and ribosome. Forms part of the polypeptide exit tunnel. The protein is Large ribosomal subunit protein uL4 of Haemophilus influenzae (strain PittEE).